A 191-amino-acid chain; its full sequence is Auxin-responsive protein IAA32 (191 aa).

The EAR-like (transcriptional repression) motif lies at 32–36; sequence LGLSL. Residues 98 to 184 enclose the PB1 domain; it reads YAYVKVNLDG…SVDRMRIARR (87 aa).

It belongs to the Aux/IAA family. As to quaternary structure, homodimers and heterodimers.

The protein localises to the nucleus. Aux/IAA proteins are short-lived transcriptional factors that function as repressors of early auxin response genes at low auxin concentrations. Repression is thought to result from the interaction with auxin response factors (ARFs), proteins that bind to the auxin-responsive promoter element (AuxRE). Formation of heterodimers with ARF proteins may alter their ability to modulate early auxin response genes expression. In Arabidopsis thaliana (Mouse-ear cress), this protein is Auxin-responsive protein IAA32.